The chain runs to 333 residues: Transcription initiation factor IIB (333 aa).

Residues 33–64 (EIYRCPICGNDRFVYNYERGEVVCIVCGAVVQ) form a TFIIB-type zinc finger. Zn(2+) is bound by residues cysteine 37, cysteine 40, cysteine 56, and cysteine 59. 2 consecutive repeat copies span residues 149–232 (QELE…LREL) and 243–324 (LYIS…ELAK).

The protein belongs to the TFIIB family.

Its function is as follows. Stabilizes TBP binding to an archaeal box-A promoter. Also responsible for recruiting RNA polymerase II to the pre-initiation complex (DNA-TBP-TFIIB). In Pyrobaculum arsenaticum (strain DSM 13514 / JCM 11321 / PZ6), this protein is Transcription initiation factor IIB.